Consider the following 324-residue polypeptide: Glucokinase (324 aa).

6–11 (IDIGGT) is a binding site for ATP.

Belongs to the bacterial glucokinase family.

It localises to the cytoplasm. It carries out the reaction D-glucose + ATP = D-glucose 6-phosphate + ADP + H(+). The protein is Glucokinase of Zymomonas mobilis subsp. mobilis (strain ATCC 31821 / ZM4 / CP4).